Consider the following 264-residue polypeptide: Thiazole synthase (264 aa).

The active-site Schiff-base intermediate with DXP is Lys-106. Residues Gly-167, 193 to 194 (AG), and 215 to 216 (NT) each bind 1-deoxy-D-xylulose 5-phosphate.

Belongs to the ThiG family. As to quaternary structure, homotetramer. Forms heterodimers with either ThiH or ThiS.

It is found in the cytoplasm. The catalysed reaction is [ThiS sulfur-carrier protein]-C-terminal-Gly-aminoethanethioate + 2-iminoacetate + 1-deoxy-D-xylulose 5-phosphate = [ThiS sulfur-carrier protein]-C-terminal Gly-Gly + 2-[(2R,5Z)-2-carboxy-4-methylthiazol-5(2H)-ylidene]ethyl phosphate + 2 H2O + H(+). The protein operates within cofactor biosynthesis; thiamine diphosphate biosynthesis. Catalyzes the rearrangement of 1-deoxy-D-xylulose 5-phosphate (DXP) to produce the thiazole phosphate moiety of thiamine. Sulfur is provided by the thiocarboxylate moiety of the carrier protein ThiS. In vitro, sulfur can be provided by H(2)S. In Xanthomonas oryzae pv. oryzae (strain MAFF 311018), this protein is Thiazole synthase.